We begin with the raw amino-acid sequence, 581 residues long: Chaperonin GroEL 1 (581 aa).

ATP contacts are provided by residues 29–32, 86–90, Gly413, and Asp492; these read TIGP and DGTTT.

This sequence belongs to the chaperonin (HSP60) family. As to quaternary structure, forms a cylinder of 14 subunits composed of two heptameric rings stacked back-to-back. Interacts with the co-chaperonin GroES.

The protein localises to the cytoplasm. It catalyses the reaction ATP + H2O + a folded polypeptide = ADP + phosphate + an unfolded polypeptide.. Together with its co-chaperonin GroES, plays an essential role in assisting protein folding. The GroEL-GroES system forms a nano-cage that allows encapsulation of the non-native substrate proteins and provides a physical environment optimized to promote and accelerate protein folding. This chain is Chaperonin GroEL 1, found in Prochlorococcus marinus subsp. pastoris (strain CCMP1986 / NIES-2087 / MED4).